Reading from the N-terminus, the 341-residue chain is NADH-ubiquinone oxidoreductase chain 2 (341 aa).

A run of 10 helical transmembrane segments spans residues 8–28, 61–81, 95–115, 121–141, 146–166, 174–194, 195–215, 238–258, 273–293, and 321–341; these read ILFT…NSWL, FLTQ…LMLA, MIIM…FWFP, LTWM…LMLI, IKNL…IGGL, LMAF…MISE, SIWL…TFMF, FSLF…GFLP, FLLT…LRIC, and LIMT…FFML.

The protein belongs to the complex I subunit 2 family.

The protein localises to the mitochondrion inner membrane. It carries out the reaction a ubiquinone + NADH + 5 H(+)(in) = a ubiquinol + NAD(+) + 4 H(+)(out). Core subunit of the mitochondrial membrane respiratory chain NADH dehydrogenase (Complex I) that is believed to belong to the minimal assembly required for catalysis. Complex I functions in the transfer of electrons from NADH to the respiratory chain. The immediate electron acceptor for the enzyme is believed to be ubiquinone. The chain is NADH-ubiquinone oxidoreductase chain 2 (mt:ND2) from Drosophila yakuba (Fruit fly).